Here is a 108-residue protein sequence, read N- to C-terminus: UPF0102 protein Sama_3355 (108 aa).

Belongs to the UPF0102 family.

This is UPF0102 protein Sama_3355 from Shewanella amazonensis (strain ATCC BAA-1098 / SB2B).